We begin with the raw amino-acid sequence, 472 residues long: Probable low-salt glycan biosynthesis flippase Agl15 (472 aa).

A run of 13 helical transmembrane segments spans residues 8 to 28 (IKLFIANIFGAGLQFLGITFF), 38 to 58 (GVFFLFQALLGIVAIPADFGL), 77 to 97 (SSAIILKLIPISLIILSIVVF), 109 to 129 (FAVYLALAIILQETAQLAVSV), 164 to 184 (AEALIYSLLAGMVVTLAWGLS), 209 to 229 (VVSSIGGYFYSWMDVAIIGIF), 244 to 264 (VTAITMLFSQAVASTIFPQVS), 289 to 309 (LVIPAFFGILVFSDEIMGIVF), 315 to 335 (IASYVLIILAGEKILQSVHVI), 354 to 374 (VISVVLNLILNVILILSFGIV), 375 to 395 (GAAVATALSFAVNTVLHAHYL), 408 to 428 (IGWCTVSSLIMAGVLFGFKTL), and 434 to 454 (LIQLFIGIFFGMLVYTTITLL).

The protein belongs to the AglR/Agl15 family.

It is found in the cell membrane. It functions in the pathway protein modification; protein glycosylation. The protein operates within cell surface structure biogenesis; S-layer biogenesis. Its function is as follows. Flippase involved in N-glycan biosynthetic pathway that takes place under low-salt conditions (1.75 M instead of 3.4 M). Participates in the formation of the tetrasaccharide present at 'Asn-532' of S-layer glycoprotein Csg, consisting of a sulfated hexose, 2 hexoses and rhamnose. Probably moves the tetrasaccharide from the cytosolic to the extracytosolic side of the membrane. The polypeptide is Probable low-salt glycan biosynthesis flippase Agl15 (agl15) (Haloferax volcanii (strain ATCC 29605 / DSM 3757 / JCM 8879 / NBRC 14742 / NCIMB 2012 / VKM B-1768 / DS2) (Halobacterium volcanii)).